The primary structure comprises 222 residues: Uclacyanin-3 (222 aa).

A signal peptide spans Met-1–Ala-21. One can recognise a Phytocyanin domain in the interval Ala-22 to Ala-120. His-61, Cys-102, His-107, and Met-112 together coordinate Cu cation. Cysteines 74 and 108 form a disulfide. The segment at Ala-121–Asn-198 is disordered. Composition is skewed to pro residues over residues Pro-125 to Ser-172 and Thr-185 to Leu-195. Asn-198 carries GPI-anchor amidated asparagine lipidation. A propeptide spans Ala-199 to Thr-222 (removed in mature form).

It localises to the cell membrane. Probably acts as an electron carrier involved in oxygen activation and/or lignin formation. The chain is Uclacyanin-3 (UCC3) from Arabidopsis thaliana (Mouse-ear cress).